Here is a 407-residue protein sequence, read N- to C-terminus: Arginine deiminase (407 aa).

The Amidino-cysteine intermediate role is filled by cysteine 397.

The protein belongs to the arginine deiminase family.

The protein localises to the cytoplasm. The catalysed reaction is L-arginine + H2O = L-citrulline + NH4(+). It participates in amino-acid degradation; L-arginine degradation via ADI pathway; carbamoyl phosphate from L-arginine: step 1/2. The chain is Arginine deiminase from Listeria welshimeri serovar 6b (strain ATCC 35897 / DSM 20650 / CCUG 15529 / CIP 8149 / NCTC 11857 / SLCC 5334 / V8).